The following is a 467-amino-acid chain: Spermatogenesis- and oogenesis-specific basic helix-loop-helix-containing protein 2 (467 aa).

The bHLH domain occupies 200 to 251; that stretch reads QASFLHSTKEKLRRERIKSCCEQLRTLLPYVKGRKSDVASVIEATVDYVKQV. Positions 443-453 are enriched in low complexity; sequence ASASDHQASQP. Positions 443–467 are disordered; it reads ASASDHQASQPPALPSPQPHDSSYF.

As to quaternary structure, forms both hetero- and homodimers with SOHLH1. In terms of tissue distribution, preferentially expressed in the adult ovary and testis. Expressed in the majority of spermatogonia in adult animals, but not in the most undifferentiated spermatogonial population.

It localises to the nucleus. It is found in the cytoplasm. Transcription regulator of both male and female germline differentiation. Suppresses genes involved in spermatogonial stem cells maintenance, and induces genes important for spermatogonial differentiation. Coordinates oocyte differentiation without affecting meiosis I. The sequence is that of Spermatogenesis- and oogenesis-specific basic helix-loop-helix-containing protein 2 (Sohlh2) from Mus musculus (Mouse).